We begin with the raw amino-acid sequence, 496 residues long: UDP-N-acetylmuramoylalanine--D-glutamate ligase (496 aa).

130–136 (GTNGKTT) provides a ligand contact to ATP.

This sequence belongs to the MurCDEF family. As to quaternary structure, interacts with PknA. Phosphorylated by PknA.

Its subcellular location is the cytoplasm. It carries out the reaction UDP-N-acetyl-alpha-D-muramoyl-L-alanine + D-glutamate + ATP = UDP-N-acetyl-alpha-D-muramoyl-L-alanyl-D-glutamate + ADP + phosphate + H(+). It participates in cell wall biogenesis; peptidoglycan biosynthesis. Functionally, cell wall formation. Catalyzes the addition of glutamate to the nucleotide precursor UDP-N-acetylmuramoyl-L-alanine (UMA). The chain is UDP-N-acetylmuramoylalanine--D-glutamate ligase from Mycobacterium tuberculosis (strain ATCC 25177 / H37Ra).